Here is a 72-residue protein sequence, read N- to C-terminus: Small ribosomal subunit protein bS18 (72 aa).

This sequence belongs to the bacterial ribosomal protein bS18 family. As to quaternary structure, part of the 30S ribosomal subunit. Forms a tight heterodimer with protein bS6.

Its function is as follows. Binds as a heterodimer with protein bS6 to the central domain of the 16S rRNA, where it helps stabilize the platform of the 30S subunit. In Francisella tularensis subsp. holarctica (strain FTNF002-00 / FTA), this protein is Small ribosomal subunit protein bS18.